A 207-amino-acid polypeptide reads, in one-letter code: Dephospho-CoA kinase (207 aa).

In terms of domain architecture, DPCK spans 4–203 (VIGLTGGIAS…EEGYIEKPNY (200 aa)). 12-17 (ASGKST) contributes to the ATP binding site.

This sequence belongs to the CoaE family.

It localises to the cytoplasm. The enzyme catalyses 3'-dephospho-CoA + ATP = ADP + CoA + H(+). The protein operates within cofactor biosynthesis; coenzyme A biosynthesis; CoA from (R)-pantothenate: step 5/5. Its function is as follows. Catalyzes the phosphorylation of the 3'-hydroxyl group of dephosphocoenzyme A to form coenzyme A. The protein is Dephospho-CoA kinase of Staphylococcus aureus (strain USA300).